We begin with the raw amino-acid sequence, 281 residues long: 2-hydroxymuconate semialdehyde hydrolase (281 aa).

Residues 30–55 (FPALLIHGSGPASPPGPTGAGSFRSS) are disordered. An AB hydrolase-1 domain is found at 31–261 (PALLIHGSGP…QCGHWTQIEH (231 aa)). Active-site residues include S106, D227, and H255.

The protein belongs to the DmpD/TodF/XylF esterase family.

It carries out the reaction (2Z,4E)-2-hydroxy-6-oxohexa-2,4-dienoate + H2O = 2-oxopent-4-enoate + formate + H(+). The protein operates within aromatic compound metabolism; benzoate degradation via hydroxylation. Functionally, catalyzes the conversion of 2-hydroxymuconate semialdehyde to 2-hydroxypent-2,4-dienoate. This is 2-hydroxymuconate semialdehyde hydrolase (xylF) from Pseudomonas putida (Arthrobacter siderocapsulatus).